Reading from the N-terminus, the 136-residue chain is Large ribosomal subunit protein uL16 (136 aa).

This sequence belongs to the universal ribosomal protein uL16 family. Part of the 50S ribosomal subunit.

Its function is as follows. Binds 23S rRNA and is also seen to make contacts with the A and possibly P site tRNAs. The chain is Large ribosomal subunit protein uL16 from Mannheimia succiniciproducens (strain KCTC 0769BP / MBEL55E).